A 132-amino-acid chain; its full sequence is AP-2 complex subunit sigma (132 aa).

This sequence belongs to the adaptor complexes small subunit family. In terms of assembly, adaptor protein complex 2 (AP-2) is a heterotetramer composed of two large adaptins (alpha-type and beta-type subunits), a medium adaptin (mu-type subunit AP50) and a small adaptin (sigma-type subunit AP17). In terms of tissue distribution, widely expressed in the embryo, endosperm, leaf and root.

The protein localises to the cell membrane. The protein resides in the membrane. It is found in the coated pit. Functionally, component of the adaptor complexes which link clathrin to receptors in coated vesicles. Clathrin-associated protein complexes are believed to interact with the cytoplasmic tails of membrane proteins, leading to their selection and concentration. AP2S1/AP17 is a subunit of the plasma membrane adaptor. The complex binds polyphosphoinositides. The chain is AP-2 complex subunit sigma (AP-17) from Zea mays (Maize).